We begin with the raw amino-acid sequence, 235 residues long: Endonuclease V (235 aa).

Positions 47 and 117 each coordinate Mg(2+).

The protein belongs to the endonuclease V family. Requires Mg(2+) as cofactor.

It is found in the cytoplasm. The enzyme catalyses Endonucleolytic cleavage at apurinic or apyrimidinic sites to products with a 5'-phosphate.. Functionally, DNA repair enzyme involved in the repair of deaminated bases. Selectively cleaves double-stranded DNA at the second phosphodiester bond 3' to a deoxyinosine leaving behind the intact lesion on the nicked DNA. The chain is Endonuclease V from Protochlamydia amoebophila (strain UWE25).